Consider the following 101-residue polypeptide: Biogenesis of lysosome-related organelles complex 1 subunit BLS1 (101 aa).

Belongs to the BLOC1S1 family. In terms of assembly, component of the biogenesis of lysosome-related organelles complex-1 (BLOC-1).

The protein resides in the endosome. In terms of biological role, component of the biogenesis of lysosome-related organelles complex-1 (BLOC-1), a complex involved in endosomal cargo sorting. This chain is Biogenesis of lysosome-related organelles complex 1 subunit BLS1 (BLS1), found in Zygosaccharomyces rouxii (strain ATCC 2623 / CBS 732 / NBRC 1130 / NCYC 568 / NRRL Y-229).